A 216-amino-acid chain; its full sequence is Large ribosomal subunit protein uL1 (216 aa).

Belongs to the universal ribosomal protein uL1 family.

The sequence is that of Large ribosomal subunit protein uL1 from Oryza sativa subsp. indica (Rice).